The following is a 266-amino-acid chain: Type 1 encapsulin shell protein (266 aa).

This sequence belongs to the encapsulin family. Family 1 subfamily. In terms of assembly, this encapsulin nanocompartment is formed by 60 subunits; monomers form 12 pentamers which assemble to form shells. Shells are loaded with 4 encapsulated ferritin-like protein decamers (EncFtn) in a tetrahedral arrangement. A 3 nm gap is consistently seen between the shell and the cargo.

It localises to the encapsulin nanocompartment. Shell component of a type 1 encapsulin nanocompartment. Assembles into proteinaceous shells about 21 nm in diameter. Small pores form at, or close to, the 2-, 3-, and 5-fold symmetry axes. Data analysis suggests the 5-fold pores open and close with maximal and minimal aperatures of 15 and 5 Angstroms. Cargo protein Fer (ferritin-like protein, probably stores iron) is targeted to the interior via its C-terminal extension; empty intact shells can be isolated in the absence of cargo protein. The polypeptide is Type 1 encapsulin shell protein (Haliangium ochraceum (strain DSM 14365 / JCM 11303 / SMP-2)).